Consider the following 1377-residue polypeptide: Zinc finger MYM-type protein 2 (1377 aa).

Glycyl lysine isopeptide (Lys-Gly) (interchain with G-Cter in SUMO2) cross-links involve residues Lys-48, Lys-88, Lys-98, and Lys-104. Polar residues-rich tracts occupy residues 85–115 (TSSK…SVSE) and 127–138 (TNQGQEKNSSNF). The segment at 85–177 (TSSKNEELQG…GMGNSGITTE (93 aa)) is disordered. Positions 139–152 (IERRPPETKNRTND) are enriched in basic and acidic residues. A Glycyl lysine isopeptide (Lys-Gly) (interchain with G-Cter in SUMO2) cross-link involves residue Lys-147. Residues 153–164 (VDFSTSSFSRSK) show a composition bias toward polar residues. At Ser-159 the chain carries Phosphoserine. Residues Lys-253 and Lys-297 each participate in a glycyl lysine isopeptide (Lys-Gly) (interchain with G-Cter in SUMO2) cross-link. Residues 273–305 (NGESATHHNPDSWISQSASFPRNQKQPGVDSLS) form a disordered region. Over residues 284–298 (SWISQSASFPRNQKQ) the composition is skewed to polar residues. Ser-305 is modified (phosphoserine). Residues Lys-312, Lys-325, Lys-348, and Lys-366 each participate in a glycyl lysine isopeptide (Lys-Gly) (interchain with G-Cter in SUMO2) cross-link. An MYM-type 1 zinc finger spans residues 327–363 (VKVTCANCKKPLQKGQTAYQRKGSAHLFCSTTCLSSF). Residues 369 to 409 (PKKLCVMCKKDITTMKGTIVAQVDSSESFQEFCSTSCLSLY) form an MYM-type 2 zinc finger. Glycyl lysine isopeptide (Lys-Gly) (interchain with G-Cter in SUMO2) cross-links involve residues Lys-417, Lys-441, Lys-491, Lys-503, Lys-513, Lys-529, and Lys-532. 2 MYM-type zinc fingers span residues 421 to 456 (NKSR…FNRY) and 463 to 502 (IMNC…VSEY). The MYM-type 5 zinc finger occupies 533–570 (LTTCTGCRTQCRFFDMTQCIGPNGYMEPYCSTACMNSH). Glycyl lysine isopeptide (Lys-Gly) (interchain with G-Cter in SUMO2) cross-links involve residues Lys-576, Lys-603, Lys-649, Lys-658, Lys-688, Lys-700, and Lys-709. The MYM-type 6 zinc-finger motif lies at 636–671 (QLKCNYCKNSFCSKPEILEWENKVHQFCSKTCSDDY). MYM-type zinc fingers lie at residues 723–758 (RCVT…CKKF) and 764–799 (KAAR…LLRF). Glycyl lysine isopeptide (Lys-Gly) (interchain with G-Cter in SUMO2) cross-links involve residues Lys-764, Lys-788, Lys-812, and Lys-829. Phosphoserine occurs at positions 838 and 958. Disordered stretches follow at residues 983–1002 (LLKN…PYEP) and 1028–1064 (VFGE…SDNS). Basic residues predominate over residues 1039 to 1050 (PRSKKKGAKRKA). A Phosphoserine modification is found at Ser-1064. At Thr-1376 the chain carries Phosphothreonine.

As to quaternary structure, can form homodimers. May be a component of a BHC histone deacetylase complex that contains HDAC1, HDAC2, HMG20B/BRAF35, KDM1A, RCOR1/CoREST, PHF21A/BHC80, ZMYM2, ZNF217, ZMYM3, GSE1 and GTF2I. Interacts with FOXP1 and FOXP2.

Its subcellular location is the nucleus. Functionally, involved in the negative regulation of transcription. The sequence is that of Zinc finger MYM-type protein 2 (ZMYM2) from Homo sapiens (Human).